The primary structure comprises 2316 residues: Receptor-type tyrosine-protein phosphatase zeta (2316 aa).

The N-terminal stretch at 1–24 (MRILQSFLACVQLLCVCRLDWAYG) is a signal peptide. The Extracellular segment spans residues 25 to 1637 (YYRQQRKLVE…LAEGLESEKK (1613 aa)). An Alpha-carbonic anhydrase domain is found at 36-300 (IGWSYTGALN…KFSRQVFSSY (265 aa)). Disulfide bonds link cysteine 56-cysteine 240 and cysteine 133-cysteine 264. Asparagine 105, asparagine 134, asparagine 223, asparagine 232, asparagine 324, asparagine 381, and asparagine 497 each carry an N-linked (GlcNAc...) asparagine glycan. Residues 314–413 (EPENVQADPE…LIVDMPTEDA (100 aa)) enclose the Fibronectin type-III domain. Disordered regions lie at residues 433 to 499 (YGKG…LNTS) and 518 to 537 (LPSQ…TSAS). An N-linked (GlcNAc...) asparagine glycan is attached at asparagine 552. Phosphoserine is present on residues serine 572 and serine 576. Disordered stretches follow at residues 586–624 (KLDS…TPEA) and 636–720 (RNAL…EMPH). Low complexity predominate over residues 592-602 (DDSSGSSPASS). Serine 595 is a glycosylation site (O-linked (Xyl...) (chondroitin sulfate) serine). Residues 603–621 (TVPFSTDNLSHGYTSSSDT) show a composition bias toward polar residues. Asparagine 610 carries N-linked (GlcNAc...) asparagine glycosylation. The residue at position 645 (serine 645) is a Phosphoserine; alternate. O-linked (Xyl...) (chondroitin sulfate) serine; alternate glycosylation is present at serine 645. Serine 647 is subject to Phosphoserine. Polar residues predominate over residues 666-675 (TDLTTQSETG). Asparagine 685 carries an N-linked (GlcNAc...) asparagine glycan. The span at 699–711 (ETFSPDATASRGP) shows a compositional bias: polar residues. Residue asparagine 786 is glycosylated (N-linked (GlcNAc...) asparagine). A glycan (O-linked (Xyl...) (chondroitin sulfate) serine) is linked at serine 1005. 2 N-linked (GlcNAc...) asparagine glycosylation sites follow: asparagine 1025 and asparagine 1058. Disordered stretches follow at residues 1141 to 1172 (QASG…SHPS), 1204 to 1228 (KTAL…SSSS), 1401 to 1521 (LLPS…DGRE), and 1545 to 1622 (TSDE…NSSH). Over residues 1152–1172 (LSTNSEPALSDTASSEVSHPS) the composition is skewed to polar residues. Positions 1401-1413 (LLPSKATSKPTHS) are enriched in polar residues. Positions 1425–1439 (EDGDDYDDDDYDDID) are enriched in acidic residues. N-linked (GlcNAc...) asparagine glycosylation is present at asparagine 1463. Residues 1464–1478 (DSDTQESSLVDQSDP) show a composition bias toward polar residues. Serine 1550 and serine 1552 each carry an O-linked (Xyl...) (chondroitin sulfate) serine glycan. Composition is skewed to polar residues over residues 1555–1569 (GTSD…STDF) and 1595–1609 (PRSS…HSGV). A glycan (N-linked (GlcNAc...) asparagine) is linked at asparagine 1563. Over residues 1610–1621 (SNSSEAEASNSS) the composition is skewed to low complexity. N-linked (GlcNAc...) asparagine glycans are attached at residues asparagine 1611 and asparagine 1619. A helical transmembrane segment spans residues 1638-1663 (AVIPLVIVSALTFICLVVLVGILIYW). Residues 1664 to 2316 (RKCFQTAHFY…NIAESLESLV (653 aa)) lie on the Cytoplasmic side of the membrane. Residues threonine 1685 and threonine 1688 each carry the phosphothreonine modification. 2 consecutive Tyrosine-protein phosphatase domains span residues 1718 to 1993 (FTEE…LVEA) and 2024 to 2283 (LEKQ…VLSL). Residues aspartate 1902, 1934–1940 (CSAGVGR), and glutamine 1978 each bind substrate. The active-site Phosphocysteine intermediate is the cysteine 1934. At serine 2056 the chain carries Phosphoserine.

This sequence belongs to the protein-tyrosine phosphatase family. Receptor class 5 subfamily. In terms of assembly, interacts with tenascin. Interacts with N-CAM and NG-CAM. The carbonic-anhydrase like domain interacts with CNTN1 (contactin). Interacts with PTN. Interaction with PTN promotes formation of homooligomers; oligomerization impairs phosphatase activity. Interacts (via chondroitin sulfate chains) with MDK (via C-terminal); this interaction is inhibited by PTN; this interaction promotes neuronal migration. In terms of tissue distribution, nervous tissue specific.

It localises to the cell membrane. Its subcellular location is the secreted. It carries out the reaction O-phospho-L-tyrosyl-[protein] + H2O = L-tyrosyl-[protein] + phosphate. Its function is as follows. Protein tyrosine phosphatase that negatively regulates oligodendrocyte precursor proliferation in the embryonic spinal cord. Required for normal differentiation of the precursor cells into mature, fully myelinating oligodendrocytes. May play a role in protecting oligondendrocytes against apoptosis. May play a role in the establishment of contextual memory, probably via the dephosphorylation of proteins that are part of important signaling cascades. In terms of biological role, isoform 3 (phosphacan), previously designated 3F8 chondroitin sulfate proteoglycan or 3H1 keratan sulfate proteoglycan depending on the glycosylation status, is a soluble nervous tissue-specific proteoglycan. It is synthesized by glia and binds to neurons and to the neural cell adhesion molecules tenascin, N-CAM or NG-CAM but not to laminin and fibronectin. Phosphacan acts as a potent inhibitor of cell adhesion and neurite outgrowth. This is Receptor-type tyrosine-protein phosphatase zeta (Ptprz1) from Rattus norvegicus (Rat).